A 345-amino-acid polypeptide reads, in one-letter code: Putative F-box protein At3g17265 (345 aa).

Residues 1–46 form the F-box domain; the sequence is MMFAYLPPDLESEILSRVPATFLKELQTTCKRWYALFRDPIFVKKN.

The sequence is that of Putative F-box protein At3g17265 from Arabidopsis thaliana (Mouse-ear cress).